A 309-amino-acid polypeptide reads, in one-letter code: Ribosomal RNA small subunit methyltransferase H (309 aa).

S-adenosyl-L-methionine-binding positions include 33-35, D53, F79, D100, and Q107; that span reads GGH.

It belongs to the methyltransferase superfamily. RsmH family.

It is found in the cytoplasm. The catalysed reaction is cytidine(1402) in 16S rRNA + S-adenosyl-L-methionine = N(4)-methylcytidine(1402) in 16S rRNA + S-adenosyl-L-homocysteine + H(+). Functionally, specifically methylates the N4 position of cytidine in position 1402 (C1402) of 16S rRNA. This is Ribosomal RNA small subunit methyltransferase H from Clostridium botulinum (strain ATCC 19397 / Type A).